The sequence spans 222 residues: Transmembrane protein 114 (222 aa).

The chain crosses the membrane as a helical span at residues 7-27 (ALAGAAALSGALSFVLLAAAI). N-linked (GlcNAc...) asparagine glycans are attached at residues Asn-54 and Asn-88. The next 3 helical transmembrane spans lie at 105–125 (FVILLPLSLIVMVFGGMTGFL), 133–153 (LLLLLTGILFLFGAMVTLTGI), and 188–208 (LALGWISFVSELLTGVVFLAA).

It localises to the cell junction. It is found in the tight junction. The protein localises to the lateral cell membrane. The protein resides in the apical cell membrane. The sequence is that of Transmembrane protein 114 from Mus musculus (Mouse).